The chain runs to 748 residues: Phosphoribosylformylglycinamidine synthase subunit PurL (748 aa).

His47 is a catalytic residue. Residues Tyr50 and Lys90 each contribute to the ATP site. Position 92 (Glu92) interacts with Mg(2+). Substrate-binding positions include 93 to 96 and Arg115; that span reads SHNH. His94 acts as the Proton acceptor in catalysis. A Mg(2+)-binding site is contributed by Asp116. Gln240 serves as a coordination point for substrate. Asp268 lines the Mg(2+) pocket. 312–314 provides a ligand contact to substrate; sequence ESQ. 2 residues coordinate ATP: Asn500 and Gly537. Asn538 contacts Mg(2+). A substrate-binding site is contributed by Ser540.

It belongs to the FGAMS family. In terms of assembly, monomer. Part of the FGAM synthase complex composed of 1 PurL, 1 PurQ and 2 PurS subunits.

Its subcellular location is the cytoplasm. The enzyme catalyses N(2)-formyl-N(1)-(5-phospho-beta-D-ribosyl)glycinamide + L-glutamine + ATP + H2O = 2-formamido-N(1)-(5-O-phospho-beta-D-ribosyl)acetamidine + L-glutamate + ADP + phosphate + H(+). It participates in purine metabolism; IMP biosynthesis via de novo pathway; 5-amino-1-(5-phospho-D-ribosyl)imidazole from N(2)-formyl-N(1)-(5-phospho-D-ribosyl)glycinamide: step 1/2. Part of the phosphoribosylformylglycinamidine synthase complex involved in the purines biosynthetic pathway. Catalyzes the ATP-dependent conversion of formylglycinamide ribonucleotide (FGAR) and glutamine to yield formylglycinamidine ribonucleotide (FGAM) and glutamate. The FGAM synthase complex is composed of three subunits. PurQ produces an ammonia molecule by converting glutamine to glutamate. PurL transfers the ammonia molecule to FGAR to form FGAM in an ATP-dependent manner. PurS interacts with PurQ and PurL and is thought to assist in the transfer of the ammonia molecule from PurQ to PurL. The chain is Phosphoribosylformylglycinamidine synthase subunit PurL from Leptospira biflexa serovar Patoc (strain Patoc 1 / Ames).